A 280-amino-acid chain; its full sequence is Movement protein (280 aa).

The segment at 248–267 (ESEELNVESPPAAIGSSSAS) is disordered. Low complexity predominate over residues 255–267 (ESPPAAIGSSSAS).

This sequence belongs to the cucumovirus movement protein family.

Its subcellular location is the host cell junction. The protein resides in the host plasmodesma. Its function is as follows. Transports viral genome to neighboring plant cells directly through plasmosdesmata, without any budding. The movement protein allows efficient cell to cell propagation, by bypassing the host cell wall barrier. Acts by forming a tubular structure at the host plasmodesmata, enlarging it enough to allow free passage of virion capsids. This chain is Movement protein, found in Cucumis sativus (Cucumber).